A 1302-amino-acid chain; its full sequence is Phosphoribosylformylglycinamidine synthase (1302 aa).

ATP is bound by residues 307-318 (GASTGSGGEIRD) and Ala-678. Residues Glu-718, Asn-722, and Asp-891 each coordinate Mg(2+). Residues 1049–1302 (MAILREQGVN…MFQNARKNIG (254 aa)) enclose the Glutamine amidotransferase type-1 domain. Cys-1142 acts as the Nucleophile in catalysis. Residues His-1267 and Glu-1269 contribute to the active site.

In the N-terminal section; belongs to the FGAMS family. In terms of assembly, monomer.

The protein resides in the cytoplasm. It carries out the reaction N(2)-formyl-N(1)-(5-phospho-beta-D-ribosyl)glycinamide + L-glutamine + ATP + H2O = 2-formamido-N(1)-(5-O-phospho-beta-D-ribosyl)acetamidine + L-glutamate + ADP + phosphate + H(+). Its pathway is purine metabolism; IMP biosynthesis via de novo pathway; 5-amino-1-(5-phospho-D-ribosyl)imidazole from N(2)-formyl-N(1)-(5-phospho-D-ribosyl)glycinamide: step 1/2. Phosphoribosylformylglycinamidine synthase involved in the purines biosynthetic pathway. Catalyzes the ATP-dependent conversion of formylglycinamide ribonucleotide (FGAR) and glutamine to yield formylglycinamidine ribonucleotide (FGAM) and glutamate. This chain is Phosphoribosylformylglycinamidine synthase, found in Vibrio parahaemolyticus serotype O3:K6 (strain RIMD 2210633).